A 159-amino-acid chain; its full sequence is Phosphopantetheine adenylyltransferase (159 aa).

The protein belongs to the eukaryotic CoaD family.

It localises to the cytoplasm. The catalysed reaction is (R)-4'-phosphopantetheine + ATP + H(+) = 3'-dephospho-CoA + diphosphate. It participates in cofactor biosynthesis; coenzyme A biosynthesis. Functionally, reversibly transfers an adenylyl group from ATP to 4'-phosphopantetheine, yielding dephospho-CoA (dPCoA) and pyrophosphate. The chain is Phosphopantetheine adenylyltransferase from Thermococcus gammatolerans (strain DSM 15229 / JCM 11827 / EJ3).